The following is a 340-amino-acid chain: Guanine nucleotide-binding protein G(I)/G(S)/G(T) subunit beta-1 (340 aa).

7 WD repeats span residues 53 to 83 (GHLA…IVWD), 95 to 125 (LRSS…SIYS), 141 to 170 (GHTG…ALWD), 182 to 212 (GHTG…KLWD), 224 to 254 (GHES…RLFD), 268 to 298 (NIIC…NVWD), and 310 to 340 (GHDN…KIWN).

This sequence belongs to the WD repeat G protein beta family. In terms of assembly, g proteins are composed of 3 units, alpha, beta and gamma.

Functionally, guanine nucleotide-binding proteins (G proteins) are involved as a modulator or transducer in various transmembrane signaling systems. The beta and gamma chains are required for the GTPase activity, for replacement of GDP by GTP, and for G protein-effector interaction. This Homarus americanus (American lobster) protein is Guanine nucleotide-binding protein G(I)/G(S)/G(T) subunit beta-1 (GBETA1).